Reading from the N-terminus, the 158-residue chain is MLNQLDNLTERVRGSNKLVDRWLHVRKHLLVAYYNLVGIKPGKESYMRLNEKALDDFCQSLVDYLSAGHFSIYERILHKLEGNGQLARAAKIWPQLEANTQQIMDYYDSSLETAIDHDNYLEFQKVLSDIGEALEARFVLEDKLILLVLDAARVKHPA.

Belongs to the Rsd/AlgQ family. In terms of assembly, interacts with RpoD.

It localises to the cytoplasm. Binds RpoD and negatively regulates RpoD-mediated transcription activation by preventing the interaction between the primary sigma factor RpoD with the catalytic core of the RNA polymerase and with promoter DNA. May be involved in replacement of the RNA polymerase sigma subunit from RpoD to RpoS during the transition from exponential growth to the stationary phase. This Shigella boydii serotype 4 (strain Sb227) protein is Regulator of sigma D.